The following is an 875-amino-acid chain: GATOR2 complex protein MIOS (875 aa).

WD repeat units lie at residues 58–100 (SDTP…NSKF), 111–155 (KHAR…TPDI), 182–221 (GQND…QKMF), 223–261 (NTKA…KPVL), 265–306 (EQPK…TPIG), 320–360 (PCDN…SLAW), and 395–437 (RLRA…KQYT). A C4-type zinc finger spans residues 735 to 781 (VSCNFCGKSISYSCSSVPHQGRGFSQYGVSGSPTKSKVTSCPGCRKP). Zn(2+)-binding residues include C737 and C740. Phosphoserine is present on residues S759 and S766. Residues C775, C778, C788, C827, C830, H832, H835, H838, C849, C854, and C858 each coordinate Zn(2+). The RING-type; atypical zinc finger occupies 782-863 (LPRCALCLIN…CTCKCMQLDT (82 aa)).

The protein belongs to the WD repeat mio family. In terms of assembly, component of the GATOR2 subcomplex, composed of MIOS, SEC13, SEH1L, WDR24 and WDR59. The GATOR2 complex interacts with CASTOR1 and CASTOR2; the interaction is negatively regulated by arginine. CASTOR1 and CASTOR2 convey leucine availability via direct interaction with MIOS. The GATOR2 complex interacts with SESN1, SESN2 and SESN3; the interaction is negatively regulated by amino acids. Interacts with SAR1A and SAR1B; the interaction is direct, disrupted by leucine and mediates the interaction of SAR1A or SAR1B with the GATOR2 complex to negatively regulate the TORC1 signaling upon leucine deprivation. In terms of tissue distribution, widely expressed. In brain, expressed in neurons and glia (oligodendrocytes and astrocytes), with more abundance in neurons.

The protein localises to the lysosome membrane. With respect to regulation, the GATOR2 complex is negatively regulated by the upstream amino acid sensors CASTOR1 and SESN2, which sequester the GATOR2 complex in absence of amino acids. In the presence of abundant amino acids, GATOR2 is released from CASTOR1 and SESN2 and activated. As a component of the GATOR2 complex, functions as an activator of the amino acid-sensing branch of the mTORC1 signaling pathway. The GATOR2 complex indirectly activates mTORC1 through the inhibition of the GATOR1 subcomplex. GATOR2 probably acts as an E3 ubiquitin-protein ligase toward GATOR1. In the presence of abundant amino acids, the GATOR2 complex mediates ubiquitination of the NPRL2 core component of the GATOR1 complex, leading to GATOR1 inactivation. In the absence of amino acids, GATOR2 is inhibited, activating the GATOR1 complex. Within the GATOR2 complex, MIOS is required to prevent autoubiquitination of WDR24, the catalytic subunit of the complex. The GATOR2 complex is required for brain myelination. The protein is GATOR2 complex protein MIOS of Mus musculus (Mouse).